The sequence spans 232 residues: Ion-translocating oxidoreductase complex subunit E (232 aa).

6 helical membrane-spanning segments follow: residues 18–38 (GLVQ…ITNA), 39–59 (LGLG…VSLV), 69–89 (IPVF…LINA), 93–113 (GLYL…IIIG), 127–147 (AAFD…VLGA), and 182–202 (PFLL…LIAL).

Belongs to the NqrDE/RnfAE family. As to quaternary structure, the complex is composed of six subunits: RnfA, RnfB, RnfC, RnfD, RnfE and RnfG.

Its subcellular location is the cell inner membrane. Part of a membrane-bound complex that couples electron transfer with translocation of ions across the membrane. The sequence is that of Ion-translocating oxidoreductase complex subunit E from Shewanella sp. (strain W3-18-1).